Here is a 221-residue protein sequence, read N- to C-terminus: Phosphoribosylformylglycinamidine synthase subunit PurQ (221 aa).

The Glutamine amidotransferase type-1 domain maps to 6 to 221; that stretch reads VGVVVFPGSN…LFTLKSLILK (216 aa). C89 serves as the catalytic Nucleophile. Residues H197 and E199 contribute to the active site.

As to quaternary structure, part of the FGAM synthase complex composed of 1 PurL, 1 PurQ and 2 PurS subunits.

It is found in the cytoplasm. The enzyme catalyses N(2)-formyl-N(1)-(5-phospho-beta-D-ribosyl)glycinamide + L-glutamine + ATP + H2O = 2-formamido-N(1)-(5-O-phospho-beta-D-ribosyl)acetamidine + L-glutamate + ADP + phosphate + H(+). The catalysed reaction is L-glutamine + H2O = L-glutamate + NH4(+). It participates in purine metabolism; IMP biosynthesis via de novo pathway; 5-amino-1-(5-phospho-D-ribosyl)imidazole from N(2)-formyl-N(1)-(5-phospho-D-ribosyl)glycinamide: step 1/2. Its function is as follows. Part of the phosphoribosylformylglycinamidine synthase complex involved in the purines biosynthetic pathway. Catalyzes the ATP-dependent conversion of formylglycinamide ribonucleotide (FGAR) and glutamine to yield formylglycinamidine ribonucleotide (FGAM) and glutamate. The FGAM synthase complex is composed of three subunits. PurQ produces an ammonia molecule by converting glutamine to glutamate. PurL transfers the ammonia molecule to FGAR to form FGAM in an ATP-dependent manner. PurS interacts with PurQ and PurL and is thought to assist in the transfer of the ammonia molecule from PurQ to PurL. The protein is Phosphoribosylformylglycinamidine synthase subunit PurQ of Prochlorococcus marinus (strain MIT 9312).